The following is a 454-amino-acid chain: MTLGQFGGLFCIYLIAVIFILTLTYQEFRRVKFNFNVLFSMLYLLTFYFGFPLTCMLVFQFGVAVVPVEYLLYAMLSATAFYGIYYVTYKTRLRQPRSQPRTPIFTMNRVETNLTWVLLALVAVGTVGIFFMQNGFLLFKLDSYSKIFSSDVSGVALKRFFYFFIPAMLVVYFLKQDRRAWFFFLASTVAFGILTYVIVGGTRANIIIAFSLFLFIGIVRGWITLWMLAAAGVFGIVGMFWLALKRYGLDVNGAEAFYTFLYLTRDTFSPWENLGLLLQNYDKIDFQGLAPIVRDFYVFIPSALWPERPDLVLNTANYFTWDVLDNHSGLAISPTLIGSLVVMGGVLFIPLGAIVVGLIIKWFDWLYEQGKAESNRYKAAILQSFCFGAVFNIIVLAREGLDSFVSRVVFFCVIFGACLVLAKLLYWLFDTAGLIKRQGIKSNRLSTPNAGNQL.

A run of 11 helical transmembrane segments spans residues 3-23 (LGQFGGLFCIYLIAVIFILTL), 39-59 (FSMLYLLTFYFGFPLTCMLVF), 61-81 (FGVAVVPVEYLLYAMLSATAF), 119-139 (LALVAVGTVGIFFMQNGFLLF), 154-174 (GVALKRFFYFFIPAMLVVYFL), 180-200 (AWFFFLASTVAFGILTYVIVG), 201-221 (GTRANIIIAFSLFLFIGIVRG), 222-242 (WITLWMLAAAGVFGIVGMFWL), 340-360 (LVVMGGVLFIPLGAIVVGLII), 377-397 (YKAAILQSFCFGAVFNIIVLA), and 409-429 (VFFCVIFGACLVLAKLLYWLF).

This sequence belongs to the WzyE family. In terms of assembly, probably part of a complex composed of WzxE, WzyE and WzzE.

It localises to the cell inner membrane. It participates in bacterial outer membrane biogenesis; enterobacterial common antigen biosynthesis. Its function is as follows. Probably involved in the polymerization of enterobacterial common antigen (ECA) trisaccharide repeat units. The protein is Probable ECA polymerase of Yersinia pestis bv. Antiqua (strain Angola).